A 681-amino-acid polypeptide reads, in one-letter code: Potassium-transporting ATPase ATP-binding subunit (681 aa).

Transmembrane regions (helical) follow at residues 37 to 57 (MFVV…PTYF), 64 to 84 (VGYN…ANFA), 218 to 238 (IALT…VMTL), and 255 to 275 (IALL…AIGI). Asp-306 functions as the 4-aspartylphosphate intermediate in the catalytic mechanism. ATP-binding positions include Asp-343, Glu-347, 375 to 382 (FSAETRMS), and Lys-394. 2 residues coordinate Mg(2+): Asp-517 and Asp-521. 3 helical membrane passes run 573-595 (ALTT…AIIS), 615-635 (AILS…PIAM), and 655-675 (IYGL…DMII).

This sequence belongs to the cation transport ATPase (P-type) (TC 3.A.3) family. Type IA subfamily. As to quaternary structure, the system is composed of three essential subunits: KdpA, KdpB and KdpC.

It localises to the cell membrane. It catalyses the reaction K(+)(out) + ATP + H2O = K(+)(in) + ADP + phosphate + H(+). In terms of biological role, part of the high-affinity ATP-driven potassium transport (or Kdp) system, which catalyzes the hydrolysis of ATP coupled with the electrogenic transport of potassium into the cytoplasm. This subunit is responsible for energy coupling to the transport system and for the release of the potassium ions to the cytoplasm. The sequence is that of Potassium-transporting ATPase ATP-binding subunit from Caldanaerobacter subterraneus subsp. tengcongensis (strain DSM 15242 / JCM 11007 / NBRC 100824 / MB4) (Thermoanaerobacter tengcongensis).